A 502-amino-acid chain; its full sequence is Maturase K (502 aa).

It belongs to the intron maturase 2 family. MatK subfamily.

It localises to the plastid. The protein localises to the chloroplast. Functionally, usually encoded in the trnK tRNA gene intron. Probably assists in splicing its own and other chloroplast group II introns. This is Maturase K from Spiraea cantoniensis (Reeve's meadowsweet).